Consider the following 211-residue polypeptide: Large ribosomal subunit protein eL13 (211 aa).

An N6-acetyllysine modification is found at K16. S52, S77, and S106 each carry phosphoserine. Glycyl lysine isopeptide (Lys-Gly) (interchain with G-Cter in SUMO2) cross-links involve residues K123 and K145. K174 is covalently cross-linked (Glycyl lysine isopeptide (Lys-Gly) (interchain with G-Cter in SUMO1); alternate). Residues K174 and K177 each participate in a glycyl lysine isopeptide (Lys-Gly) (interchain with G-Cter in SUMO2); alternate cross-link. N6-acetyllysine; alternate is present on K177.

It belongs to the eukaryotic ribosomal protein eL13 family. Component of the 60S large ribosomal subunit (LSU).

It is found in the cytoplasm. In terms of biological role, component of the ribosome, a large ribonucleoprotein complex responsible for the synthesis of proteins in the cell. The small ribosomal subunit (SSU) binds messenger RNAs (mRNAs) and translates the encoded message by selecting cognate aminoacyl-transfer RNA (tRNA) molecules. The large subunit (LSU) contains the ribosomal catalytic site termed the peptidyl transferase center (PTC), which catalyzes the formation of peptide bonds, thereby polymerizing the amino acids delivered by tRNAs into a polypeptide chain. The nascent polypeptides leave the ribosome through a tunnel in the LSU and interact with protein factors that function in enzymatic processing, targeting, and the membrane insertion of nascent chains at the exit of the ribosomal tunnel. As part of the LSU, it is probably required for its formation and the maturation of rRNAs. Plays a role in bone development. The polypeptide is Large ribosomal subunit protein eL13 (Rpl13) (Rattus norvegicus (Rat)).